An 85-amino-acid polypeptide reads, in one-letter code: Large ribosomal subunit protein bL27 (85 aa).

This sequence belongs to the bacterial ribosomal protein bL27 family.

In Stutzerimonas stutzeri (strain A1501) (Pseudomonas stutzeri), this protein is Large ribosomal subunit protein bL27.